A 297-amino-acid polypeptide reads, in one-letter code: Acetyl-coenzyme A carboxylase carboxyl transferase subunit beta (297 aa).

The CoA carboxyltransferase N-terminal domain maps to 27–296; it reads LWHKCPSCEA…PEQAREAAAV (270 aa). Zn(2+)-binding residues include cysteine 31, cysteine 34, cysteine 50, and cysteine 53. The segment at 31 to 53 adopts a C4-type zinc-finger fold; sequence CPSCEAVLYRPELEKTLDVCPKC.

The protein belongs to the AccD/PCCB family. In terms of assembly, acetyl-CoA carboxylase is a heterohexamer composed of biotin carboxyl carrier protein (AccB), biotin carboxylase (AccC) and two subunits each of ACCase subunit alpha (AccA) and ACCase subunit beta (AccD). Zn(2+) is required as a cofactor.

The protein localises to the cytoplasm. The catalysed reaction is N(6)-carboxybiotinyl-L-lysyl-[protein] + acetyl-CoA = N(6)-biotinyl-L-lysyl-[protein] + malonyl-CoA. It functions in the pathway lipid metabolism; malonyl-CoA biosynthesis; malonyl-CoA from acetyl-CoA: step 1/1. In terms of biological role, component of the acetyl coenzyme A carboxylase (ACC) complex. Biotin carboxylase (BC) catalyzes the carboxylation of biotin on its carrier protein (BCCP) and then the CO(2) group is transferred by the transcarboxylase to acetyl-CoA to form malonyl-CoA. The sequence is that of Acetyl-coenzyme A carboxylase carboxyl transferase subunit beta from Pseudomonas putida (strain GB-1).